An 89-amino-acid polypeptide reads, in one-letter code: Dolichol-phosphate mannose synthase subunit 3 (89 aa).

A run of 2 helical transmembrane segments spans residues 7-27 (ILSL…AAII) and 33-53 (WLLP…MVGV).

This sequence belongs to the DPM3 family. Component of the dolichol-phosphate mannose (DPM) synthase complex composed of DPMS1, DPMS2 and DPMS3; in the complex interacts directly with DPMS1 and DPMS2.

The protein resides in the endoplasmic reticulum membrane. Its pathway is protein modification; protein glycosylation. Functionally, regulates the biosynthesis of dolichol phosphate-mannose. Regulatory subunit of the dolichol-phosphate mannose (DPM) synthase complex; essential for the ER localization and stable expression of DPMS1. The polypeptide is Dolichol-phosphate mannose synthase subunit 3 (Arabidopsis thaliana (Mouse-ear cress)).